Here is a 122-residue protein sequence, read N- to C-terminus: Large ribosomal subunit protein uL14 (122 aa).

The protein belongs to the universal ribosomal protein uL14 family. Part of the 50S ribosomal subunit. Forms a cluster with proteins L3 and L19. In the 70S ribosome, L14 and L19 interact and together make contacts with the 16S rRNA in bridges B5 and B8.

Binds to 23S rRNA. Forms part of two intersubunit bridges in the 70S ribosome. The protein is Large ribosomal subunit protein uL14 of Renibacterium salmoninarum (strain ATCC 33209 / DSM 20767 / JCM 11484 / NBRC 15589 / NCIMB 2235).